Consider the following 347-residue polypeptide: MSRPDSAVSLLPDYSLRAHNTFGFDARARVAARIGSPGQFASLARDPRVAGLDRLVLGGGSNVVFTRDFDGLVLLDEIRGRALVREDDGAWYVEAGGGENWHAFVEWTLAEGMPGLENLALIPGTVGAAPIQNIGAYGLEMKEHFASLRAVDLATGELVEFDAARCAFGYRDSFFKRDGRGRFAIVAVTFRLPKAWTPRIGYADVARELAARGIDARAARARDVFDAVVAIRRAKLPDPLALGNAGSFFKNPVIDAQAFAALRAREPDIVSYPQPDGRVKLAAGWLIDRCGWKGRALGAAAVHERQALVLVNLGGASGADVLALAHAIRRDVLGRFGVELEMEPVCL.

The FAD-binding PCMH-type domain maps to 24–195 (FDARARVAAR…VAVTFRLPKA (172 aa)). The active site involves R171. Residue S247 is the Proton donor of the active site. E343 is an active-site residue.

The protein belongs to the MurB family. FAD is required as a cofactor.

The protein localises to the cytoplasm. The enzyme catalyses UDP-N-acetyl-alpha-D-muramate + NADP(+) = UDP-N-acetyl-3-O-(1-carboxyvinyl)-alpha-D-glucosamine + NADPH + H(+). The protein operates within cell wall biogenesis; peptidoglycan biosynthesis. Its function is as follows. Cell wall formation. The sequence is that of UDP-N-acetylenolpyruvoylglucosamine reductase from Burkholderia mallei (strain NCTC 10247).